The following is a 476-amino-acid chain: Growth/differentiation factor 10 (476 aa).

The signal sequence occupies residues Met1–Cys29. The propeptide occupies Gly30–Arg366. The tract at residues Leu39 to Leu63 is disordered. Asn114, Asn152, and Asn277 each carry an N-linked (GlcNAc...) asparagine glycan. Residues Gly268–Gly301 are disordered. 3 disulfides stabilise this stretch: Cys374-Cys441, Cys403-Cys473, and Cys407-Cys475. An N-linked (GlcNAc...) asparagine glycan is attached at Asn467.

This sequence belongs to the TGF-beta family. As to quaternary structure, homodimer or heterodimer. Can form a non-covalent complex of the mature region and the pro-region. As to expression, highly expressed in epididymal adipose tissue, brain, bone and aorta and to a lesser extent in liver and spleen. Expressed at higher levels in preadipocytes than in mature adipocytes. Strongly expressed in glial cells of the cerebellum.

The protein localises to the secreted. Functionally, growth factor involved in osteogenesis and adipogenesis. Plays an inhibitory role in the process of osteoblast differentiation via SMAD2/3 pathway. Plays an inhibitory role in the process of adipogenesis. The sequence is that of Growth/differentiation factor 10 from Mus musculus (Mouse).